The sequence spans 107 residues: Benzene 1,2-dioxygenase system ferredoxin subunit (107 aa).

The Rieske domain maps to 4 to 99 (TYILRQSDLP…IKVEGDEVHV (96 aa)). Residues C43, H45, C62, and H65 each coordinate [2Fe-2S] cluster.

Belongs to the bacterial ring-hydroxylating dioxygenase ferredoxin component family. As to quaternary structure, this dioxygenase system consists of four proteins: the two subunits of the hydroxylase component (BnzA and BnzB), a ferredoxin (BnzC) and a ferredoxin reductase (BnzD).

It participates in aromatic compound metabolism; benzene degradation; catechol from benzene: step 1/2. Functionally, this protein seems to be a 2Fe-2S ferredoxin. This chain is Benzene 1,2-dioxygenase system ferredoxin subunit (bnzC), found in Pseudomonas putida (Arthrobacter siderocapsulatus).